Here is a 267-residue protein sequence, read N- to C-terminus: UPF0328 protein ECU06_0070 (267 aa).

It belongs to the UPF0328 family.

The protein is UPF0328 protein ECU06_0070 of Encephalitozoon cuniculi (strain GB-M1) (Microsporidian parasite).